Reading from the N-terminus, the 467-residue chain is Dihydroorotase (467 aa).

The Zn(2+) site is built by H60 and H62. Residues 62 to 64 (HFR) and N94 each bind substrate. Zn(2+) contacts are provided by E146, H180, H234, and D313. D313 is an active-site residue. H317 contacts substrate. The tract at residues 439 to 467 (KPGRGEFLEGSGKRSEEDEEENSEETGSD) is disordered. Over residues 441 to 454 (GRGEFLEGSGKRSE) the composition is skewed to basic and acidic residues. Positions 455-467 (EDEEENSEETGSD) are enriched in acidic residues.

It belongs to the metallo-dependent hydrolases superfamily. DHOase family. Class I DHOase subfamily. The cofactor is Zn(2+).

The enzyme catalyses (S)-dihydroorotate + H2O = N-carbamoyl-L-aspartate + H(+). Its pathway is pyrimidine metabolism; UMP biosynthesis via de novo pathway; (S)-dihydroorotate from bicarbonate: step 3/3. Catalyzes the reversible cyclization of carbamoyl aspartate to dihydroorotate. This is Dihydroorotase from Methanosarcina acetivorans (strain ATCC 35395 / DSM 2834 / JCM 12185 / C2A).